The chain runs to 398 residues: Ribosomal RNA small subunit methyltransferase B (398 aa).

Residues 221–227 (CGGAGLK), Asp242, Asp268, and Asp283 contribute to the S-adenosyl-L-methionine site. The active-site Nucleophile is Cys336.

The protein belongs to the class I-like SAM-binding methyltransferase superfamily. RsmB/NOP family.

It localises to the cytoplasm. The catalysed reaction is cytidine(967) in 16S rRNA + S-adenosyl-L-methionine = 5-methylcytidine(967) in 16S rRNA + S-adenosyl-L-homocysteine + H(+). In terms of biological role, specifically methylates the cytosine at position 967 (m5C967) of 16S rRNA. This chain is Ribosomal RNA small subunit methyltransferase B, found in Thermus thermophilus (strain ATCC 27634 / DSM 579 / HB8).